The following is a 900-amino-acid chain: MGTLLLEVTMLKNKFFPLLILVSVLLSLISYLLNLYSDWLFFDETGFSSVFTTTLYAKTGAGLLFGGLLFLFVQINLHVANRAQFPLSGMHLLGAGNLGINRDQAVRLCKPVSMLVSFVLALLAGNLGAMKWKDLLFFANRLTVGTVDPLIGKDVGFYLFSLPLLDAVKGVSGFIILAAAALATAVYYVRGGILLTERGVAIDEKVRRHLAVLVGIFACAVAAGFYLDSFKLLYADNGAFYGAGYVDVNSRLLTYRVLTFLTPLAGAMLAIGIWKGVWRMALLAPAIVVALYMLGIRVYPGVLQKFKVAPNEMALETPYIMNNITATRFGYDLEKIETVPFDVDTKLTAADIANNDATIKNIRLWDHAPLLKTYSQLQQIRTYYKFFDVDNDRYMVNGRYSQVMLSPRELSYADLPSKNWINERLIFTHGNGITFGPVSRISKEGLPEFFVKDIPAVSLADIKVSRPEIYYGELSNEYVIVKTNVPEFSYPTATGNITTTYAGTGGVPMDSLLKKALFAAKFRTEKILLSSDITKESRILYNRNINERIRTIAPFLHFDSDPYLVVDQKGRLKWIIDAYTHSTRLPYSRPLKGGINYIRNSVKTVVDAYDGSVDFYISDPDDVILKVHGRIFPKLFKPMAEMPGDLRKHVRYPHHLLQIQAAMFATYHMTDPKVFYNKENLWEIPVLGDKAMEPYYTIMKLPGEKAEEYILLLPFTPSKRDNLAAWLTARCDEPQYGKIRAYTFPRDRLIYGPKQIDARINQDSFISQQLTLWSQRGSEAIRGSLLVIPIEKSLLYVQPLFLAADKAGLPELKRVIVAFGDQLVMEENLELALQRIFGGKKAAPAATSGVSADTQASPATLAKEAVSIYEKAITLQRQGNWAAYGEELRSLEQILKKMAR.

A run of 7 helical transmembrane segments spans residues 15–35, 60–80, 112–132, 174–194, 210–230, 257–277, and 282–302; these read FFPL…LLNL, GAGL…LHVA, VSML…AMKW, FIIL…GGIL, LAVL…LDSF, VLTF…WKGV, and LLAP…YPGV.

The protein belongs to the UPF0182 family.

The protein resides in the cell membrane. In Pelobacter propionicus (strain DSM 2379 / NBRC 103807 / OttBd1), this protein is UPF0182 protein Ppro_3567.